Consider the following 165-residue polypeptide: ATP synthase subunit delta, mitochondrial (165 aa).

The transit peptide at 1–27 (MNSLRIARAALRVRPTAVRAPLQRRGY) directs the protein to the mitochondrion.

This sequence belongs to the ATPase epsilon chain family. In terms of assembly, F-type ATPases have 2 components, CF(1) - the catalytic core - and CF(0) - the membrane proton channel. CF(1) has five subunits: alpha(3), beta(3), gamma(1), delta(1), epsilon(1). CF(0) has three main subunits: a, b and c.

It is found in the mitochondrion. Its subcellular location is the mitochondrion inner membrane. Functionally, mitochondrial membrane ATP synthase (F(1)F(0) ATP synthase or Complex V) produces ATP from ADP in the presence of a proton gradient across the membrane which is generated by electron transport complexes of the respiratory chain. F-type ATPases consist of two structural domains, F(1) - containing the extramembraneous catalytic core, and F(0) - containing the membrane proton channel, linked together by a central stalk and a peripheral stalk. During catalysis, ATP turnover in the catalytic domain of F(1) is coupled via a rotary mechanism of the central stalk subunits to proton translocation. Part of the complex F(1) domain and of the central stalk which is part of the complex rotary element. Rotation of the central stalk against the surrounding alpha(3)beta(3) subunits leads to hydrolysis of ATP in three separate catalytic sites on the beta subunits. This is ATP synthase subunit delta, mitochondrial (des) from Neurospora crassa (strain ATCC 24698 / 74-OR23-1A / CBS 708.71 / DSM 1257 / FGSC 987).